The sequence spans 71 residues: Large ribosomal subunit protein uL29 (71 aa).

Belongs to the universal ribosomal protein uL29 family.

This is Large ribosomal subunit protein uL29 from Methanococcus maripaludis (strain C7 / ATCC BAA-1331).